A 478-amino-acid polypeptide reads, in one-letter code: Proline--tRNA ligase (478 aa).

This sequence belongs to the class-II aminoacyl-tRNA synthetase family. ProS type 3 subfamily. As to quaternary structure, homodimer.

Its subcellular location is the cytoplasm. The catalysed reaction is tRNA(Pro) + L-proline + ATP = L-prolyl-tRNA(Pro) + AMP + diphosphate. Catalyzes the attachment of proline to tRNA(Pro) in a two-step reaction: proline is first activated by ATP to form Pro-AMP and then transferred to the acceptor end of tRNA(Pro). The chain is Proline--tRNA ligase from Methanothrix thermoacetophila (strain DSM 6194 / JCM 14653 / NBRC 101360 / PT) (Methanosaeta thermophila).